Consider the following 268-residue polypeptide: Undecaprenyl-diphosphatase (268 aa).

A run of 7 helical transmembrane segments spans residues 47 to 67, 83 to 103, 109 to 129, 144 to 164, 184 to 204, 218 to 238, and 246 to 266; these read FTVLIQPGAILAIVVIYFAKL, FVIGVLAAFLPAVIVGLIAGK, LFNPWVVCFSLIVGGAVLMWV, FPLPMYVWIGIAQCVAMIPGV, AAEFSFFLAIPTMTGAFAYDF, TVAIGFVVSFVTAIIVVKAFL, and FTFFAWWRVIVGTLGLIALAL.

It belongs to the UppP family.

The protein localises to the cell inner membrane. It catalyses the reaction di-trans,octa-cis-undecaprenyl diphosphate + H2O = di-trans,octa-cis-undecaprenyl phosphate + phosphate + H(+). Functionally, catalyzes the dephosphorylation of undecaprenyl diphosphate (UPP). Confers resistance to bacitracin. This is Undecaprenyl-diphosphatase from Nitrobacter winogradskyi (strain ATCC 25391 / DSM 10237 / CIP 104748 / NCIMB 11846 / Nb-255).